Here is a 509-residue protein sequence, read N- to C-terminus: ATP synthase subunit alpha (509 aa).

ATP is bound at residue 169-176 (GDRQTGKT).

This sequence belongs to the ATPase alpha/beta chains family. As to quaternary structure, F-type ATPases have 2 components, CF(1) - the catalytic core - and CF(0) - the membrane proton channel. CF(1) has five subunits: alpha(3), beta(3), gamma(1), delta(1), epsilon(1). CF(0) has three main subunits: a(1), b(2) and c(9-12). The alpha and beta chains form an alternating ring which encloses part of the gamma chain. CF(1) is attached to CF(0) by a central stalk formed by the gamma and epsilon chains, while a peripheral stalk is formed by the delta and b chains.

Its subcellular location is the cell inner membrane. It carries out the reaction ATP + H2O + 4 H(+)(in) = ADP + phosphate + 5 H(+)(out). Its function is as follows. Produces ATP from ADP in the presence of a proton gradient across the membrane. The alpha chain is a regulatory subunit. This chain is ATP synthase subunit alpha, found in Chelativorans sp. (strain BNC1).